The chain runs to 786 residues: Endonuclease MutS2 (786 aa).

332–339 (GPNTGGKT) serves as a coordination point for ATP. Positions 711 to 786 (VDLRGMDSIE…GTGVTIVELK (76 aa)) constitute a Smr domain.

Belongs to the DNA mismatch repair MutS family. MutS2 subfamily. Homodimer. Binds to stalled ribosomes, contacting rRNA.

Functionally, endonuclease that is involved in the suppression of homologous recombination and thus may have a key role in the control of bacterial genetic diversity. Acts as a ribosome collision sensor, splitting the ribosome into its 2 subunits. Detects stalled/collided 70S ribosomes which it binds and splits by an ATP-hydrolysis driven conformational change. Acts upstream of the ribosome quality control system (RQC), a ribosome-associated complex that mediates the extraction of incompletely synthesized nascent chains from stalled ribosomes and their subsequent degradation. Probably generates substrates for RQC. This chain is Endonuclease MutS2, found in Clostridium kluyveri (strain NBRC 12016).